A 329-amino-acid polypeptide reads, in one-letter code: Glycerol-3-phosphate dehydrogenase [NAD(P)+] (329 aa).

Residues serine 13, tryptophan 14, histidine 34, and lysine 105 each coordinate NADPH. Sn-glycerol 3-phosphate is bound by residues lysine 105, glycine 134, and serine 136. Alanine 138 is a binding site for NADPH. Residues lysine 189, aspartate 242, serine 252, arginine 253, and asparagine 254 each coordinate sn-glycerol 3-phosphate. Lysine 189 acts as the Proton acceptor in catalysis. Residue arginine 253 participates in NADPH binding. NADPH contacts are provided by valine 277 and glutamate 279.

Belongs to the NAD-dependent glycerol-3-phosphate dehydrogenase family.

It localises to the cytoplasm. The enzyme catalyses sn-glycerol 3-phosphate + NAD(+) = dihydroxyacetone phosphate + NADH + H(+). It catalyses the reaction sn-glycerol 3-phosphate + NADP(+) = dihydroxyacetone phosphate + NADPH + H(+). It functions in the pathway membrane lipid metabolism; glycerophospholipid metabolism. Its function is as follows. Catalyzes the reduction of the glycolytic intermediate dihydroxyacetone phosphate (DHAP) to sn-glycerol 3-phosphate (G3P), the key precursor for phospholipid synthesis. This Legionella pneumophila subsp. pneumophila (strain Philadelphia 1 / ATCC 33152 / DSM 7513) protein is Glycerol-3-phosphate dehydrogenase [NAD(P)+].